We begin with the raw amino-acid sequence, 593 residues long: Probable 5'-nucleotidase (593 aa).

The N-terminal stretch at 1-21 (MKRFIPHRVIHAVCIGLALVG) is a signal peptide. The N-palmitoyl cysteine moiety is linked to residue Cys22. The S-diacylglycerol cysteine moiety is linked to residue Cys22. A divalent metal cation is bound by residues Asp41, His43, Asp91, Asn123, and His224. Residues Phe456 and 539–545 (YIARGKD) each bind substrate.

It belongs to the 5'-nucleotidase family. The cofactor is a divalent metal cation.

The protein resides in the cell membrane. It catalyses the reaction a ribonucleoside 5'-phosphate + H2O = a ribonucleoside + phosphate. The sequence is that of Probable 5'-nucleotidase from Treponema pallidum (strain Nichols).